The following is a 315-amino-acid chain: Intradiol ring-cleavage dioxygenase prcA (315 aa).

Fe cation contacts are provided by Y166, Y200, H224, and H226. The interval 287 to 315 is disordered; the sequence is KKHHPNPNSAPPVSSFERFNKASKTQEKL. Positions 304–315 are enriched in basic and acidic residues; it reads RFNKASKTQEKL.

Belongs to the intradiol ring-cleavage dioxygenase family. In terms of assembly, homodimer. It depends on Fe(3+) as a cofactor.

The catalysed reaction is 3,4-dihydroxybenzoate + O2 = 3-carboxy-cis,cis-muconate + 2 H(+). Its function is as follows. Intradiol ring-cleavage dioxygenase; part of the benzoic acid degradation pathway also known as the protocatechuic acid pathway. Benzoic acid debradation begins with the conversion of benzoic acid into 4-hydroxybenzoic acid through hydroxylation by the benzoate-4-monooxygenase bphA, and its partner NADPH-cytochrome P450 reductase cprA which act as a mediator in electron donation from NADPH. 4-Hydroxybenzoic acid is then converted into 3,4-dihydroxybenzoic acid (also called protocatechuic acid) by the p-hydroxybenzoate-m-hydroxylase phhA. Protocatechuic acid is converted into 3-carboxy-cis,cis-muconic acid by the intradiol ring-cleavage dioxygenase prcA, which is further metabolized through the 3-oxoadipate pathway to finally enter the tricarboxylic acid cycle (TCA). The chain is Intradiol ring-cleavage dioxygenase prcA from Aspergillus niger (strain ATCC MYA-4892 / CBS 513.88 / FGSC A1513).